A 424-amino-acid polypeptide reads, in one-letter code: 23S rRNA (uracil(1939)-C(5))-methyltransferase RlmD (424 aa).

The TRAM domain maps to Met-1–Glu-56. Cys-69, Cys-75, Cys-78, and Cys-155 together coordinate [4Fe-4S] cluster. 6 residues coordinate S-adenosyl-L-methionine: Gln-255, Phe-284, Asn-289, Glu-305, Asp-333, and Asp-354. The active-site Nucleophile is the Cys-380.

Belongs to the class I-like SAM-binding methyltransferase superfamily. RNA M5U methyltransferase family. RlmD subfamily.

The catalysed reaction is uridine(1939) in 23S rRNA + S-adenosyl-L-methionine = 5-methyluridine(1939) in 23S rRNA + S-adenosyl-L-homocysteine + H(+). Catalyzes the formation of 5-methyl-uridine at position 1939 (m5U1939) in 23S rRNA. The polypeptide is 23S rRNA (uracil(1939)-C(5))-methyltransferase RlmD (Dichelobacter nodosus (strain VCS1703A)).